Here is a 290-residue protein sequence, read N- to C-terminus: Arylamine N-acetyltransferase 1 (290 aa).

At methionine 1 the chain carries N-acetylmethionine. Cysteine 68 serves as the catalytic Acyl-thioester intermediate. CoA-binding residues include threonine 103 and glycine 104. Residue 106–107 (IH) coordinates substrate. Active-site residues include histidine 107 and aspartate 122. CoA contacts are provided by tyrosine 208 and serine 214.

The protein belongs to the arylamine N-acetyltransferase family.

Its subcellular location is the cytoplasm. The catalysed reaction is an arylamine + acetyl-CoA = an N-acetylarylamine + CoA. In terms of biological role, participates in the detoxification of a plethora of hydrazine and arylamine drugs. Catalyzes the N- or O-acetylation of various arylamine and heterocyclic amine substrates and is able to bioactivate several known carcinogens. The sequence is that of Arylamine N-acetyltransferase 1 (NAT1) from Homo sapiens (Human).